Consider the following 127-residue polypeptide: uncharacterized protein (127 aa).

Helical transmembrane passes span 20–42 (NMIWLYEVYMLYKTYTSYFFMSS), 54–76 (IYFCYCANFIALFRVIFGTIFVY), and 91–110 (WILIYLKGSINSLLYMASFT).

It localises to the membrane. It is found in the cytoplasm. This is an uncharacterized protein from Schizosaccharomyces pombe (strain 972 / ATCC 24843) (Fission yeast).